The following is a 738-amino-acid chain: MISAVFGKRRSLSRTLTAGTICAALISGYATMASADDGQGATGEAIIHADDHPGNWMTYGRTYSDQRYSPLDQINRSNVGNLKLAWYLDLDTNRGQEGTPLVIDGVMYATTNWSMMKAVDAATGKLLWSYDPRVPGNIADKGCCDTVNRGAAYWNGKVYFGTFDGRLIALDAKTGKLVWSVNTIPPEAELGKQRSYTVDGAPRIAKGRVIIGNGGSEFGARGFVSAFDAETGKVDWRFFTVPNPKNEPDAASDSVLMNKAYQTWSPTGAWTRQGGGGTVWDSIVYDPVADLVYLGVGNGSPWNYKYRSEGKGDNLFLGSIVALKPETGEYVWHFQETPMDQWDFTSDQQIMTLDLPINGETRHVIVHARKNGFFYIIDAKTGEFISGKNYVYVNWASGLDPKTGRPIYNPDALYTLTGKEWYGIPGDLGGHNFAAMAFSPKTGLVYIPAQQVPFLYTNQVGGFTPHPDSWNLGLDMNKVGIPDSPEAKQAFVKDLKGWIVAWDPQKQAEAWRVDHKGPWNGGILATGGDLLFQGLANGEFHAYDATNGSDLFHFAADSGIIAPPVTYLANGKQYVAVEVGWGGIYPFFLGGLARTSGWTVNHSRIIAFSLDGKSGPLPKQNDQGFLPVKPPAQFDSKRTDNGYFQFQTYCAACHGDNAEGAGVLPDLRWSGSIRHEDAFYNVVGRGALTAYGMDRLHGNMNPTEIEDIRQFLIKRANETYQREVDARKNADGIPEQLP.

A signal peptide spans 1 to 35; that stretch reads MISAVFGKRRSLSRTLTAGTICAALISGYATMASA. Residue E97 coordinates pyrroloquinoline quinone. A disulfide bridge links C143 with C144. R149 is a binding site for pyrroloquinoline quinone. Residue E217 participates in Ca(2+) binding. A pyrroloquinoline quinone-binding site is contributed by T278. Positions 298 and 343 each coordinate Ca(2+). Residue D343 is the Proton acceptor of the active site. Positions 370 and 584 each coordinate pyrroloquinoline quinone. One can recognise a Cytochrome c domain in the interval 634–738; that stretch reads FDSKRTDNGY…NADGIPEQLP (105 aa). 4 residues coordinate heme c: C650, C653, H654, and M693.

This sequence belongs to the bacterial PQQ dehydrogenase family. As to quaternary structure, the alcohol dehydrogenase multicomponent enzyme system is composed of a dehydrogenase subunit I (AdhA) and a cytochrome c subunit II (AdhB). It depends on pyrroloquinoline quinone as a cofactor. Requires Ca(2+) as cofactor. The cofactor is heme c.

It is found in the cell membrane. It carries out the reaction ethanol + a ubiquinone = a ubiquinol + acetaldehyde. In terms of biological role, dehydrogenase component of the alcohol dehydrogenase multicomponent enzyme system which is involved in the production of acetic acid and in the ethanol oxidase respiratory chain. Quinohemoprotein alcohol dehydrogenase (ADH) catalyzes the oxidation of ethanol to acetaldehyde by transferring electrons to the ubiquinone embedded in the membrane phospholipids. The electrons transfer from ethanol to membranous ubiquinone occurs from pyrroloquinoline quinone (PQQ) to one heme c in subunit I (AdhA), and finally to two heme c in subunit II (AdhB). Besides ubiquinone reduction, ADH also has a ubiquinol (QH2) oxidation reaction which mediates electron transfer from ubiquinol to the non-energy generating bypass oxidase system. The electrons transfer occurs from ubiquinol (QH2) to the additional heme c within subunit II (AdhB). This Gluconacetobacter polyoxogenes (Acetobacter polyoxogenes) protein is Alcohol dehydrogenase (quinone), dehydrogenase subunit (adhA).